Consider the following 331-residue polypeptide: Ribose-phosphate pyrophosphokinase (331 aa).

55-57 (DGE) lines the ATP pocket. Mg(2+)-binding residues include histidine 148 and aspartate 187. Lysine 211 is a catalytic residue. D-ribose 5-phosphate-binding positions include arginine 213, aspartate 237, and 241–245 (DTGGT).

It belongs to the ribose-phosphate pyrophosphokinase family. Class I subfamily. In terms of assembly, homohexamer. Requires Mg(2+) as cofactor.

The protein localises to the cytoplasm. It catalyses the reaction D-ribose 5-phosphate + ATP = 5-phospho-alpha-D-ribose 1-diphosphate + AMP + H(+). It functions in the pathway metabolic intermediate biosynthesis; 5-phospho-alpha-D-ribose 1-diphosphate biosynthesis; 5-phospho-alpha-D-ribose 1-diphosphate from D-ribose 5-phosphate (route I): step 1/1. Its function is as follows. Involved in the biosynthesis of the central metabolite phospho-alpha-D-ribosyl-1-pyrophosphate (PRPP) via the transfer of pyrophosphoryl group from ATP to 1-hydroxyl of ribose-5-phosphate (Rib-5-P). The polypeptide is Ribose-phosphate pyrophosphokinase (Parasynechococcus marenigrum (strain WH8102)).